The sequence spans 552 residues: Transcription factor kayak (552 aa).

Disordered stretches follow at residues 110–145 and 177–234; these read LAQG…TDST and GAAS…KRRV. Over residues 111 to 127 the composition is skewed to polar residues; sequence AQGSDSEDSNASYNDTQ. The segment covering 135–145 has biased composition (low complexity); that stretch reads TDTSSAHTDST. Polar residues predominate over residues 177–192; it reads GAASVGSSNANTSNTP. Residues 212-275 enclose the bZIP domain; that stretch reads EQKRAVRRER…NQLEYCLAAH (64 aa). The interval 214–233 is basic motif; the sequence is KRAVRRERNKQAAARCRKRR. Residues 240-247 are leucine-zipper; sequence LTEEVEQL. The span at 304–325 shows a compositional bias: low complexity; that stretch reads AGSSGSGASSHHNHNSNDSSNG. Disordered stretches follow at residues 304 to 346, 365 to 390, and 514 to 552; these read AGSS…PLDL, LDGA…TLPP, and GGTG…LVSL. Over residues 333–343 the composition is skewed to polar residues; sequence TLNSTGRSNSP. A Phosphoserine modification is found at Ser342.

The protein belongs to the bZIP family. Fos subfamily. In terms of assembly, homodimer. Heterodimer with Jra. The kay-Jra heterodimer binds more stably to the AP-1 site than either of the two proteins alone.

It localises to the nucleus. Its function is as follows. Developmentally regulated transcription factor AP-1 binds and recognizes the enhancer DNA sequence: 5'-TGA[CG]TCA-3'. May play a role in the function or determination of a particular subset of cells in the developing embryo. It is able to carry out its function either independently of or in conjunction with Jra. In Drosophila yakuba (Fruit fly), this protein is Transcription factor kayak.